Here is a 199-residue protein sequence, read N- to C-terminus: MSNYQLEWVSPKQLRPHEDVILSIVNENIEILRKDNSMAPIIVDKNSMVILDGHHRYYASLSLGLPKIPAIMIDYNSEQVEVREWNRIIAPDSSIRDFLRVFRSSVDGKYCVSYKSDVVFCDDNIYSLYWKEEAIEQLLSRMGYNVVKTADQEATISIPPVPKNVVIDFSYKGLRFPPKSTRHIYHFYIPKQRIILQWD.

This sequence belongs to the ParB family.

Its function is as follows. Probably part of a 4-gene DNA damage response locus in which the upstream ups system, in combination with this downstream locus, functions in homologous recombination to rescue Sulfolobales from DNA-damaging threats. This protein might function in the DNA transfer machinery. The chain is ParB-like protein Saci_1498 from Sulfolobus acidocaldarius (strain ATCC 33909 / DSM 639 / JCM 8929 / NBRC 15157 / NCIMB 11770).